An 83-amino-acid polypeptide reads, in one-letter code: Exodeoxyribonuclease 7 small subunit (83 aa).

Residues 1–25 form a disordered region; the sequence is MQDELFETEKAPPKNAKNAPKKSFE.

This sequence belongs to the XseB family. In terms of assembly, heterooligomer composed of large and small subunits.

The protein resides in the cytoplasm. It catalyses the reaction Exonucleolytic cleavage in either 5'- to 3'- or 3'- to 5'-direction to yield nucleoside 5'-phosphates.. Its function is as follows. Bidirectionally degrades single-stranded DNA into large acid-insoluble oligonucleotides, which are then degraded further into small acid-soluble oligonucleotides. This chain is Exodeoxyribonuclease 7 small subunit, found in Helicobacter pylori (strain P12).